The chain runs to 118 residues: Large ribosomal subunit protein uL18 (118 aa).

This sequence belongs to the universal ribosomal protein uL18 family. In terms of assembly, part of the 50S ribosomal subunit; part of the 5S rRNA/L5/L18/L25 subcomplex. Contacts the 5S and 23S rRNAs.

Its function is as follows. This is one of the proteins that bind and probably mediate the attachment of the 5S RNA into the large ribosomal subunit, where it forms part of the central protuberance. This is Large ribosomal subunit protein uL18 from Limosilactobacillus reuteri (strain DSM 20016) (Lactobacillus reuteri).